The following is a 74-amino-acid chain: Anionic peptide clone 9 (74 aa).

An N-terminal signal peptide occupies residues methionine 1 to alanine 24.

It belongs to the non-disulfide-bridged peptide (NDBP) superfamily. Long chain multifunctional peptide (group 2) family. Expressed by the venom gland.

Its subcellular location is the secreted. Functionally, may be an antimicrobial peptide. The chain is Anionic peptide clone 9 from Tityus costatus (Brazilian scorpion).